Reading from the N-terminus, the 264-residue chain is Thymidylate synthase (264 aa).

R21 lines the dUMP pocket. Position 51 (H51) interacts with (6R)-5,10-methylene-5,6,7,8-tetrahydrofolate. A dUMP-binding site is contributed by 126–127; that stretch reads RR. Catalysis depends on C146, which acts as the Nucleophile. Residues 166-169, N177, and 207-209 each bind dUMP; these read RSCD and HLY. D169 lines the (6R)-5,10-methylene-5,6,7,8-tetrahydrofolate pocket. A263 contacts (6R)-5,10-methylene-5,6,7,8-tetrahydrofolate.

It belongs to the thymidylate synthase family. Bacterial-type ThyA subfamily. As to quaternary structure, homodimer.

The protein localises to the cytoplasm. It carries out the reaction dUMP + (6R)-5,10-methylene-5,6,7,8-tetrahydrofolate = 7,8-dihydrofolate + dTMP. It participates in pyrimidine metabolism; dTTP biosynthesis. Its function is as follows. Catalyzes the reductive methylation of 2'-deoxyuridine-5'-monophosphate (dUMP) to 2'-deoxythymidine-5'-monophosphate (dTMP) while utilizing 5,10-methylenetetrahydrofolate (mTHF) as the methyl donor and reductant in the reaction, yielding dihydrofolate (DHF) as a by-product. This enzymatic reaction provides an intracellular de novo source of dTMP, an essential precursor for DNA biosynthesis. This Shewanella amazonensis (strain ATCC BAA-1098 / SB2B) protein is Thymidylate synthase.